We begin with the raw amino-acid sequence, 221 residues long: Small ribosomal subunit protein uS5 (221 aa).

The disordered stretch occupies residues 1–40 (MMAQRNSGAPDNAGGSNDGREGGRGRRDNRDDRRGGRDNA). Basic and acidic residues predominate over residues 18–40 (DGREGGRGRRDNRDDRRGGRDNA). Residues 45-108 (YLERVVTINR…DEARKNFFRV (64 aa)) enclose the S5 DRBM domain.

It belongs to the universal ribosomal protein uS5 family. As to quaternary structure, part of the 30S ribosomal subunit. Contacts proteins S4 and S8.

Functionally, with S4 and S12 plays an important role in translational accuracy. Its function is as follows. Located at the back of the 30S subunit body where it stabilizes the conformation of the head with respect to the body. The polypeptide is Small ribosomal subunit protein uS5 (Mycobacteroides abscessus (strain ATCC 19977 / DSM 44196 / CCUG 20993 / CIP 104536 / JCM 13569 / NCTC 13031 / TMC 1543 / L948) (Mycobacterium abscessus)).